A 354-amino-acid polypeptide reads, in one-letter code: Guanine nucleotide-binding protein G(i) subunit alpha (354 aa).

The N-myristoyl glycine moiety is linked to residue Gly-2. Cys-3 carries S-palmitoyl cysteine lipidation. Residues 32–354 (REVKLLLLGA…KNNLKDCGLF (323 aa)) enclose the G-alpha domain. Residues 35–48 (KLLLLGAGESGKST) form a G1 motif region. GTP is bound by residues 40-47 (GAGESGKS), 175-181 (LRTRVKT), 200-204 (DVGGQ), 269-272 (NKKD), and Ala-326. Residues Ser-47 and Thr-181 each coordinate Mg(2+). The tract at residues 173 to 181 (DVLRTRVKT) is G2 motif. The tract at residues 196-205 (FKMFDVGGQR) is G3 motif. A G4 motif region spans residues 265–272 (ILFLNKKD). Positions 324 to 329 (TCATDT) are G5 motif.

It belongs to the G-alpha family. G(i/o/t/z) subfamily. G proteins are composed of 3 units; alpha, beta and gamma. The alpha chain contains the guanine nucleotide binding site.

Guanine nucleotide-binding proteins (G proteins) are involved as modulators or transducers in various transmembrane signaling systems. The chain is Guanine nucleotide-binding protein G(i) subunit alpha from Planorbella trivolvis (Marsh rams-horn).